A 652-amino-acid chain; its full sequence is Probable export ATP-binding/permease protein PFL_2149 (652 aa).

Residues 6 to 244 (LHLTGISRSF…APSEPPVSVR (239 aa)) enclose the ABC transporter domain. ATP is bound at residue 42 to 49 (GASGSGKS). 5 helical membrane passes run 251 to 271 (LVAS…ALVS), 277 to 297 (LLTM…VAIG), 525 to 545 (LALL…IGVM), 586 to 606 (IGGA…TLFI), and 615 to 635 (MGSI…FGFV).

It belongs to the ABC transporter superfamily. Macrolide exporter (TC 3.A.1.122) family. Probably part of a tripartite efflux system, which is composed of an inner membrane transporter, a periplasmic membrane fusion protein, and an outer membrane component.

The protein resides in the cell inner membrane. Functionally, probably part of a tripartite efflux system. The chain is Probable export ATP-binding/permease protein PFL_2149 from Pseudomonas fluorescens (strain ATCC BAA-477 / NRRL B-23932 / Pf-5).